The following is a 356-amino-acid chain: Cobalt-precorrin-5B C(1)-methyltransferase (356 aa).

Belongs to the CbiD family.

It catalyses the reaction Co-precorrin-5B + S-adenosyl-L-methionine = Co-precorrin-6A + S-adenosyl-L-homocysteine. It functions in the pathway cofactor biosynthesis; adenosylcobalamin biosynthesis; cob(II)yrinate a,c-diamide from sirohydrochlorin (anaerobic route): step 6/10. Functionally, catalyzes the methylation of C-1 in cobalt-precorrin-5B to form cobalt-precorrin-6A. This Citrifermentans bemidjiense (strain ATCC BAA-1014 / DSM 16622 / JCM 12645 / Bem) (Geobacter bemidjiensis) protein is Cobalt-precorrin-5B C(1)-methyltransferase.